We begin with the raw amino-acid sequence, 495 residues long: GTPase Der (495 aa).

Residues 3–178 (AKIALVGRPN…EMRDLLPEED (176 aa)) form the EngA-type G 1 domain. Residues 9–16 (GRPNVGKS), 57–61 (DTGGI), and 130–133 (NKVD) contribute to the GTP site. Residues 190 to 227 (TAVASADADVDADVETEGGTSASETEEGITEETVEDEP) form a disordered region. The segment covering 213–227 (ETEEGITEETVEDEP) has biased composition (acidic residues). In terms of domain architecture, EngA-type G 2 spans 231-404 (LRLCMLGRPN…LAARIRRECS (174 aa)). GTP is bound by residues 237-244 (GRPNAGKS), 284-288 (DTAGV), and 349-352 (NKMD). A KH-like domain is found at 405 to 489 (VRIPTGQLNR…PMRVHFRSSH (85 aa)).

This sequence belongs to the TRAFAC class TrmE-Era-EngA-EngB-Septin-like GTPase superfamily. EngA (Der) GTPase family. In terms of assembly, associates with the 50S ribosomal subunit.

In terms of biological role, GTPase that plays an essential role in the late steps of ribosome biogenesis. This Nitratidesulfovibrio vulgaris (strain DP4) (Desulfovibrio vulgaris) protein is GTPase Der.